Here is a 358-residue protein sequence, read N- to C-terminus: Golgi-resident adenosine 3',5'-bisphosphate 3'-phosphatase (358 aa).

Methionine 1 carries the N-acetylmethionine modification. The Cytoplasmic segment spans residues 1–12 (MAPMGIRLSPLG). Residues 13–33 (VAVFCLLGLGVLYHLYSGFLA) form a helical membrane-spanning segment. Topologically, residues 34–358 (GRFSLFGLGG…KLPDLEKMGH (325 aa)) are lumenal. The interval 85-106 (RESNVLHEKSKGKTREGADDKM) is disordered. The Proton acceptor role is filled by aspartate 110. Residues glutamate 133, aspartate 174, leucine 176, and aspartate 177 each contribute to the Mg(2+) site. Threonine 179 acts as the Proton acceptor in catalysis. Positions 242 and 245 each coordinate AMP. Asparagine 259 is a glycosylation site (N-linked (GlcNAc...) asparagine). Residues glycine 268 and lysine 272 each coordinate AMP. Residue aspartate 300 coordinates Mg(2+).

It belongs to the inositol monophosphatase superfamily. Requires Mg(2+) as cofactor. Post-translationally, contains N-linked glycan resistant to endoglycosydase H.

The protein localises to the golgi apparatus. It is found in the trans-Golgi network membrane. It carries out the reaction adenosine 3',5'-bisphosphate + H2O = AMP + phosphate. It functions in the pathway sulfur metabolism. With respect to regulation, strongly inhibited by lithium. Functionally, exhibits 3'-nucleotidase activity toward adenosine 3',5'-bisphosphate (PAP), namely hydrolyzes adenosine 3',5'-bisphosphate into adenosine 5'-monophosphate (AMP) and a phosphate. May play a role in the formation of skeletal elements derived through endochondral ossification, possibly by clearing adenosine 3',5'-bisphosphate produced by Golgi sulfotransferases during glycosaminoglycan sulfation. Has no activity toward 3'-phosphoadenosine 5'-phosphosulfate (PAPS) or inositol phosphate (IP) substrates including I(1)P, I(1,4)P2, I(1,3,4)P3, I(1,4,5)P3 and I(1,3,4,5)P4. This Callithrix jacchus (White-tufted-ear marmoset) protein is Golgi-resident adenosine 3',5'-bisphosphate 3'-phosphatase (BPNT2).